Consider the following 98-residue polypeptide: Co-chaperonin GroES (98 aa).

This sequence belongs to the GroES chaperonin family. Heptamer of 7 subunits arranged in a ring. Interacts with the chaperonin GroEL.

The protein resides in the cytoplasm. Its function is as follows. Together with the chaperonin GroEL, plays an essential role in assisting protein folding. The GroEL-GroES system forms a nano-cage that allows encapsulation of the non-native substrate proteins and provides a physical environment optimized to promote and accelerate protein folding. GroES binds to the apical surface of the GroEL ring, thereby capping the opening of the GroEL channel. In Paenarthrobacter aurescens (strain TC1), this protein is Co-chaperonin GroES.